Here is a 525-residue protein sequence, read N- to C-terminus: Nucleolar and spindle-associated protein 1-C (525 aa).

4 disordered regions span residues 43–203, 250–293, 373–398, and 452–525; these read FYPE…KKLH, TPVS…FSAA, TPES…EKAK, and LSRP…VPVQ. Residues 58–69 show a composition bias toward polar residues; it reads SSLTDTDELNSS. Positions 82 to 92 are enriched in basic residues; that stretch reads THRRGRGRKPL. Positions 93–102 are enriched in basic and acidic residues; that stretch reads KNHDTPKDEF. A compositionally biased stretch (polar residues) spans 113 to 127; sequence SLASETDNTQHQNCL. Positions 160 to 169 are enriched in basic and acidic residues; it reads TTEKRQKKAS. Over residues 270–285 the composition is skewed to polar residues; sequence PPTTGASPSRTPTNQR. The segment covering 476 to 494 has biased composition (polar residues); sequence CGSNNNVSVLKNNFKQPHL. Positions 495–514 are enriched in basic and acidic residues; that stretch reads QTREDRRKQHEQDRKGKRDQ.

This sequence belongs to the NUSAP family. Interacts with DNA, microtubules, ipo7, kpna2 and kpnb1. Microtubule stabilization is inhibited by ipo7 and kpna2, while microtubule bundling is inhibited by kpnb1. Active GTP-bound ran causes dissociation of ipo7 and kpnb1.

It localises to the cytoplasm. Its subcellular location is the nucleus. It is found in the cytoskeleton. The protein localises to the spindle. In terms of biological role, microtubule-associated protein with the capacity to bundle and stabilize microtubules. May associate with chromosomes and promote the organization of meiotic or mitotic spindle microtubules around them. This chain is Nucleolar and spindle-associated protein 1-C (nusap1-c), found in Xenopus laevis (African clawed frog).